We begin with the raw amino-acid sequence, 398 residues long: Unsaturated chondroitin disaccharide hydrolase (398 aa).

Asp-115 acts as the Nucleophile in catalysis. The substrate site is built by Asp-115, Asp-175, Gly-233, Thr-235, Arg-247, Trp-251, Ser-365, and Ser-368. Asp-175 serves as the catalytic Proton donor.

This sequence belongs to the glycosyl hydrolase 88 family. Monomer.

The enzyme catalyses beta-D-4-deoxy-Delta(4)-GlcpA-(1-&gt;3)-beta-D-GalpNAc6S + H2O = N-acetyl-beta-D-galactosamine 6-sulfate + 5-dehydro-4-deoxy-D-glucuronate. In terms of biological role, catalyzes the hydrolysis of unsaturated hyaluronate and chondroitin disaccharides. Also degrades unsaturated heparin disaccharides. Releases 4-deoxy-4,5-didehydro D-glucuronic acid or 4-deoxy-4,5-didehydro L-iduronic acid from chondroitin disaccharides, hyaluronan disaccharides and heparin disaccharides and cleaves both glycosidic (1-&gt;3) and (1-&gt;4) bonds. Prefers sulfated glycosaminoglycans compared to unsulfated glycosaminoglycans. Probably required for mammalian cells invasion through the degradation of extracellular sulfated glycosaminoglycans such as chondroitin and hyaluronan. The polypeptide is Unsaturated chondroitin disaccharide hydrolase (Streptococcus agalactiae serotype III (strain NEM316)).